A 210-amino-acid chain; its full sequence is Glycerol-3-phosphate acyltransferase (210 aa).

The next 5 membrane-spanning stretches (helical) occupy residues 4–24 (LIVA…IVSA), 52–72 (AAIL…WLTG), 82–102 (DTSV…PVFF), 118–138 (LAIN…VAFF), and 159–179 (FLFG…LLIW).

Belongs to the PlsY family. As to quaternary structure, probably interacts with PlsX.

It is found in the cell inner membrane. It catalyses the reaction an acyl phosphate + sn-glycerol 3-phosphate = a 1-acyl-sn-glycero-3-phosphate + phosphate. Its pathway is lipid metabolism; phospholipid metabolism. Its function is as follows. Catalyzes the transfer of an acyl group from acyl-phosphate (acyl-PO(4)) to glycerol-3-phosphate (G3P) to form lysophosphatidic acid (LPA). This enzyme utilizes acyl-phosphate as fatty acyl donor, but not acyl-CoA or acyl-ACP. The polypeptide is Glycerol-3-phosphate acyltransferase (Paraburkholderia phymatum (strain DSM 17167 / CIP 108236 / LMG 21445 / STM815) (Burkholderia phymatum)).